Reading from the N-terminus, the 132-residue chain is MTEVRSCFSSALRRRQCASTSAAVSATSSPKTCGCRCTSFVTSVPATSSIANGSSASSWAIRAWKTTWSRTSPNSSRSSPRSPASMASTSSYISSTPYLTRSWWVRRALHGHARRIRSMTSTTSSRRAPGRS.

The interval 68–91 (WSRTSPNSSRSSPRSPASMASTSS) is disordered.

This is an uncharacterized protein from Streptomyces cacaoi.